The sequence spans 317 residues: Adenine deaminase (317 aa).

Zn(2+) contacts are provided by histidine 14, histidine 16, and histidine 194. Catalysis depends on glutamate 197, which acts as the Proton donor. Aspartate 275 lines the Zn(2+) pocket. Aspartate 276 is a binding site for substrate.

It belongs to the metallo-dependent hydrolases superfamily. Adenosine and AMP deaminases family. Adenine deaminase type 2 subfamily. It depends on Zn(2+) as a cofactor.

The enzyme catalyses adenine + H2O + H(+) = hypoxanthine + NH4(+). Catalyzes the hydrolytic deamination of adenine to hypoxanthine. Plays an important role in the purine salvage pathway and in nitrogen catabolism. This is Adenine deaminase from Bordetella bronchiseptica (strain ATCC BAA-588 / NCTC 13252 / RB50) (Alcaligenes bronchisepticus).